The chain runs to 169 residues: Macrocypin-1a (169 aa).

The protein belongs to the protease inhibitor I85 family.

Functionally, inhibits papain and cysteine cathepsin endopeptidases, and also inhibits cathepsins B and H, which exhibit both exopeptidase and endopeptidase activities. The sequence is that of Macrocypin-1a from Macrolepiota procera (Parasol mushroom).